We begin with the raw amino-acid sequence, 329 residues long: Ig gamma-2 chain C region (329 aa).

Cystine bridges form between Cys-28/Cys-79, Cys-142/Cys-202, and Cys-248/Cys-308. The N-linked (GlcNAc...) asparagine glycan is linked to Asn-178.

The protein localises to the secreted. The polypeptide is Ig gamma-2 chain C region (Cavia porcellus (Guinea pig)).